The sequence spans 87 residues: Probable Fe(2+)-trafficking protein (87 aa).

This sequence belongs to the Fe(2+)-trafficking protein family.

Its function is as follows. Could be a mediator in iron transactions between iron acquisition and iron-requiring processes, such as synthesis and/or repair of Fe-S clusters in biosynthetic enzymes. The polypeptide is Probable Fe(2+)-trafficking protein (Francisella tularensis subsp. holarctica (strain FTNF002-00 / FTA)).